Reading from the N-terminus, the 545-residue chain is Chaperonin GroEL 2 (545 aa).

Residues 30-33 (TLGP), Lys51, 87-91 (DGTTT), Gly415, and Asp494 each bind ATP. The interval 526-545 (EKGAGMPGMPPGGGYPGMGM) is disordered. Over residues 536 to 545 (PGGGYPGMGM) the composition is skewed to gly residues.

This sequence belongs to the chaperonin (HSP60) family. Forms a cylinder of 14 subunits composed of two heptameric rings stacked back-to-back. Interacts with the co-chaperonin GroES.

The protein localises to the cytoplasm. The enzyme catalyses ATP + H2O + a folded polypeptide = ADP + phosphate + an unfolded polypeptide.. In terms of biological role, together with its co-chaperonin GroES, plays an essential role in assisting protein folding. The GroEL-GroES system forms a nano-cage that allows encapsulation of the non-native substrate proteins and provides a physical environment optimized to promote and accelerate protein folding. This chain is Chaperonin GroEL 2, found in Syntrophus aciditrophicus (strain SB).